The following is a 166-amino-acid chain: Interferon gamma-related (166 aa).

Positions 1-26 (MYCRLNMVYLICALLLIVSLQGTVGA) are cleaved as a signal peptide. Asparagine 91 is a glycosylation site (N-linked (GlcNAc...) asparagine).

Belongs to the type II (or gamma) interferon family. In terms of assembly, homodimer. Strongly expressed in spleen. Also detected at lower levels in gill, kidney, heart, brain and intestine. In immune cell populations, expressed at highest levels in peripheral blood leukocytes and at lower levels in splenocytes, granulocytes, monocytes and macrophages.

It localises to the secreted. In terms of biological role, cytokine which binds to interferon gamma receptor 1 (ifngr1). Has activating effects on primary macrophages. Induces nitric oxide production and phagocytic responses in macrophages. Primes monocytes for production of reactive oxygen intermediates (ROI), although the effect is short-lived. Also has inhibitory effects on monocyte priming by ifng1 (interferon gamma 1) and tnfb (TNF-alpha 2). Stimulates phosphorylation of the JAK/STAT signal transducer stat1, but fails to induce stat1 nuclear localization. Promotes increased expression of a number of genes important for macrophage activity, including the interferon regulatory factors irf2 and irf9. In Carassius auratus (Goldfish), this protein is Interferon gamma-related.